Reading from the N-terminus, the 322-residue chain is Ubiquitin-conjugating enzyme E2 U (322 aa).

The UBC core domain maps to 4-153 (RAYLLLQRDF…LKLFNRPLQM (150 aa)). The Glycyl thioester intermediate role is filled by cysteine 89.

This sequence belongs to the ubiquitin-conjugating enzyme family. Autoubiquitinated in vitro in the presence of UBR5.

It carries out the reaction S-ubiquitinyl-[E1 ubiquitin-activating enzyme]-L-cysteine + [E2 ubiquitin-conjugating enzyme]-L-cysteine = [E1 ubiquitin-activating enzyme]-L-cysteine + S-ubiquitinyl-[E2 ubiquitin-conjugating enzyme]-L-cysteine.. The protein operates within protein modification; protein ubiquitination. In terms of biological role, catalyzes the covalent attachment of ubiquitin to other proteins. The polypeptide is Ubiquitin-conjugating enzyme E2 U (UBE2U) (Macaca fascicularis (Crab-eating macaque)).